The following is a 404-amino-acid chain: ATP phosphoribosyltransferase regulatory subunit (404 aa).

The protein belongs to the class-II aminoacyl-tRNA synthetase family. HisZ subfamily. In terms of assembly, heteromultimer composed of HisG and HisZ subunits.

Its subcellular location is the cytoplasm. It participates in amino-acid biosynthesis; L-histidine biosynthesis; L-histidine from 5-phospho-alpha-D-ribose 1-diphosphate: step 1/9. Functionally, required for the first step of histidine biosynthesis. May allow the feedback regulation of ATP phosphoribosyltransferase activity by histidine. In Trichormus variabilis (strain ATCC 29413 / PCC 7937) (Anabaena variabilis), this protein is ATP phosphoribosyltransferase regulatory subunit.